We begin with the raw amino-acid sequence, 411 residues long: Proteasome-activating nucleotidase 2 (411 aa).

Residues 35–75 (IVAVNGELQAQLDDVEARREELREEVNRLQRENETLKTASL) adopt a coiled-coil conformation. Residues 196-201 (GTGKTM) and His335 each bind ATP. A docks into pockets in the proteasome alpha-ring to cause gate opening region spans residues 408–411 (SYIQ).

Belongs to the AAA ATPase family. As to quaternary structure, homohexamer. The hexameric complex has a two-ring architecture resembling a top hat that caps the 20S proteasome core at one or both ends. Upon ATP-binding, the C-terminus of PAN interacts with the alpha-rings of the proteasome core by binding to the intersubunit pockets.

It localises to the cytoplasm. Its function is as follows. ATPase which is responsible for recognizing, binding, unfolding and translocation of substrate proteins into the archaeal 20S proteasome core particle. Is essential for opening the gate of the 20S proteasome via an interaction with its C-terminus, thereby allowing substrate entry and access to the site of proteolysis. Thus, the C-termini of the proteasomal ATPase function like a 'key in a lock' to induce gate opening and therefore regulate proteolysis. Unfolding activity requires energy from ATP hydrolysis, whereas ATP binding alone promotes ATPase-20S proteasome association which triggers gate opening, and supports translocation of unfolded substrates. This Halobacterium salinarum (strain ATCC 700922 / JCM 11081 / NRC-1) (Halobacterium halobium) protein is Proteasome-activating nucleotidase 2.